The following is a 284-amino-acid chain: Bifunctional protein FolD (284 aa).

Residues 165 to 167 (GRS) and Ser-190 contribute to the NADP(+) site.

The protein belongs to the tetrahydrofolate dehydrogenase/cyclohydrolase family. In terms of assembly, homodimer.

The catalysed reaction is (6R)-5,10-methylene-5,6,7,8-tetrahydrofolate + NADP(+) = (6R)-5,10-methenyltetrahydrofolate + NADPH. It catalyses the reaction (6R)-5,10-methenyltetrahydrofolate + H2O = (6R)-10-formyltetrahydrofolate + H(+). The protein operates within one-carbon metabolism; tetrahydrofolate interconversion. In terms of biological role, catalyzes the oxidation of 5,10-methylenetetrahydrofolate to 5,10-methenyltetrahydrofolate and then the hydrolysis of 5,10-methenyltetrahydrofolate to 10-formyltetrahydrofolate. This Streptococcus uberis (strain ATCC BAA-854 / 0140J) protein is Bifunctional protein FolD.